The chain runs to 310 residues: Methionyl-tRNA formyltransferase (310 aa).

110-113 is a (6S)-5,6,7,8-tetrahydrofolate binding site; the sequence is SLLP.

The protein belongs to the Fmt family.

The catalysed reaction is L-methionyl-tRNA(fMet) + (6R)-10-formyltetrahydrofolate = N-formyl-L-methionyl-tRNA(fMet) + (6S)-5,6,7,8-tetrahydrofolate + H(+). Attaches a formyl group to the free amino group of methionyl-tRNA(fMet). The formyl group appears to play a dual role in the initiator identity of N-formylmethionyl-tRNA by promoting its recognition by IF2 and preventing the misappropriation of this tRNA by the elongation apparatus. This Streptomyces griseus subsp. griseus (strain JCM 4626 / CBS 651.72 / NBRC 13350 / KCC S-0626 / ISP 5235) protein is Methionyl-tRNA formyltransferase.